Consider the following 450-residue polypeptide: Growth/differentiation factor 7 (450 aa).

Residues 1–19 (MDLSAAAALCLWLLSACRP) form the signal peptide. A propeptide spanning residues 20–321 (RDGLEAAAVL…AVIGGRRRRR (302 aa)) is cleaved from the precursor. A glycan (N-linked (GlcNAc...) asparagine) is linked at Asn-83. The disordered stretch occupies residues 296–349 (ASEPLPDPGTGTASPRAVIGGRRRRRTALAGTRTAQGSGGGAGRGHGRRGRSRC). Over residues 340–349 (GHGRRGRSRC) the composition is skewed to basic residues. Intrachain disulfides connect Cys-349–Cys-415, Cys-378–Cys-447, and Cys-382–Cys-449.

The protein belongs to the TGF-beta family. Homodimer; disulfide-linked.

Its subcellular location is the secreted. Functionally, may play an active role in the motor area of the primate neocortex. This is Growth/differentiation factor 7 (GDF7) from Homo sapiens (Human).